We begin with the raw amino-acid sequence, 348 residues long: Inactive rhomboid-related protein 2 (348 aa).

Residues 14–49 enclose the EF-hand domain; it reads IEASSWIRIFRAFDTDHDGLIQCEEMQKTIRDSTYS. Aspartate 27, aspartate 29, aspartate 31, and glutamate 38 together coordinate Ca(2+). The next 7 membrane-spanning stretches (helical) occupy residues 121–141, 177–197, 207–227, 229–249, 263–283, 290–310, and 323–343; these read PPIF…YYVV, LINV…AIGV, IYIL…ALDP, VFLC…ITTI, LPIL…QRFF, VSMY…FILF, and FWVS…LIAA.

Belongs to the peptidase S54 family.

It localises to the membrane. Probable inactive serine protease. This chain is Inactive rhomboid-related protein 2, found in Caenorhabditis elegans.